The following is a 293-amino-acid chain: Phospholipid scramblase 2 (293 aa).

The interval 1-39 (MDKQNVQMNPPHPGTNLTGPPGHIGYPGPQAGYAVPPPG) is disordered. The segment at 1–66 (MDKQNVQMNP…GHPGAPTQVP (66 aa)) is proline-rich domain (PRD). Residues 1–270 (MDKQNVQMNP…IQFPLDLDVK (270 aa)) lie on the Cytoplasmic side of the membrane. Threonine 143 bears the Phosphothreonine; by PKC mark. 4 S-palmitoyl cysteine lipidation sites follow: cysteine 166, cysteine 167, cysteine 170, and cysteine 171. Residues 271-287 (MKAVMLGACFLIDFMFF) traverse the membrane as a helical segment. Over 288 to 293 (EMTRGE) the chain is Extracellular.

The protein belongs to the phospholipid scramblase family. The cofactor is Ca(2+).

Its subcellular location is the membrane. It carries out the reaction a 1,2-diacyl-sn-glycero-3-phosphocholine(in) = a 1,2-diacyl-sn-glycero-3-phosphocholine(out). In terms of biological role, may catalyze calcium-induced ATP-independent rapid bidirectional and non-specific movement of phospholipids (lipid scrambling or lipid flip-flop) between the inner and outer leaflet of the plasma membrane. The sequence is that of Phospholipid scramblase 2 from Bos taurus (Bovine).